A 248-amino-acid chain; its full sequence is Segregation and condensation protein A (248 aa).

The protein belongs to the ScpA family. In terms of assembly, component of a cohesin-like complex composed of ScpA, ScpB and the Smc homodimer, in which ScpA and ScpB bind to the head domain of Smc. The presence of the three proteins is required for the association of the complex with DNA.

It localises to the cytoplasm. Its function is as follows. Participates in chromosomal partition during cell division. May act via the formation of a condensin-like complex containing Smc and ScpB that pull DNA away from mid-cell into both cell halves. The polypeptide is Segregation and condensation protein A (Clostridium perfringens (strain ATCC 13124 / DSM 756 / JCM 1290 / NCIMB 6125 / NCTC 8237 / Type A)).